A 264-amino-acid polypeptide reads, in one-letter code: PDZ domain-containing protein 9 (264 aa).

Residues 22-109 (VHNLSKTQQT…GTVLQIKVYR (88 aa)) enclose the PDZ domain.

The protein is PDZ domain-containing protein 9 (PDZD9) of Macaca fascicularis (Crab-eating macaque).